The sequence spans 1373 residues: DNA-directed RNA polymerase subunit beta'' (1373 aa).

Cys220, Cys293, Cys300, and Cys303 together coordinate Zn(2+).

Belongs to the RNA polymerase beta' chain family. RpoC2 subfamily. As to quaternary structure, in plastids the minimal PEP RNA polymerase catalytic core is composed of four subunits: alpha, beta, beta', and beta''. When a (nuclear-encoded) sigma factor is associated with the core the holoenzyme is formed, which can initiate transcription. Requires Zn(2+) as cofactor.

It is found in the plastid. Its subcellular location is the chloroplast. The enzyme catalyses RNA(n) + a ribonucleoside 5'-triphosphate = RNA(n+1) + diphosphate. Functionally, DNA-dependent RNA polymerase catalyzes the transcription of DNA into RNA using the four ribonucleoside triphosphates as substrates. The polypeptide is DNA-directed RNA polymerase subunit beta'' (Lepidium virginicum (Virginia pepperweed)).